Consider the following 401-residue polypeptide: S-adenosylmethionine synthase (401 aa).

An ATP-binding site is contributed by histidine 15. Residue aspartate 17 participates in Mg(2+) binding. Position 48 (glutamate 48) interacts with K(+). L-methionine contacts are provided by glutamate 61 and glutamine 104. The segment at 104 to 114 is flexible loop; the sequence is QSPDIALGVDR. Residues 179 to 181, 246 to 247, aspartate 255, 261 to 262, alanine 278, and lysine 282 each bind ATP; these read DGK, RF, and RK. Aspartate 255 is a binding site for L-methionine. Lysine 286 provides a ligand contact to L-methionine.

This sequence belongs to the AdoMet synthase family. Homotetramer; dimer of dimers. The cofactor is Mg(2+). K(+) serves as cofactor.

The protein resides in the cytoplasm. It catalyses the reaction L-methionine + ATP + H2O = S-adenosyl-L-methionine + phosphate + diphosphate. It participates in amino-acid biosynthesis; S-adenosyl-L-methionine biosynthesis; S-adenosyl-L-methionine from L-methionine: step 1/1. Its function is as follows. Catalyzes the formation of S-adenosylmethionine (AdoMet) from methionine and ATP. The overall synthetic reaction is composed of two sequential steps, AdoMet formation and the subsequent tripolyphosphate hydrolysis which occurs prior to release of AdoMet from the enzyme. This chain is S-adenosylmethionine synthase, found in Petrotoga mobilis (strain DSM 10674 / SJ95).